Consider the following 274-residue polypeptide: Secreted RxLR effector protein 144 (274 aa).

Residues 1–20 (MRPWLLLLVGLSSFFALSTS) form the signal peptide. Residues 49–72 (RKLRAFGGDTNTLKDSGKARREEK) carry the RxLR-dEER motif.

This sequence belongs to the RxLR effector family.

The protein localises to the secreted. The protein resides in the host nucleus. It is found in the host cytoplasm. Its function is as follows. Secreted effector that completely suppresses the host cell death induced by cell death-inducing proteins. This is Secreted RxLR effector protein 144 from Plasmopara viticola (Downy mildew of grapevine).